The sequence spans 1059 residues: Probable sucrose-phosphate synthase (1059 aa).

Disordered stretches follow at residues 95 to 145, 671 to 695, 710 to 731, and 748 to 769; these read AVQR…VKSR, RHPQ…GDSL, DGER…NATD, and SKDT…ASKF. The segment covering 102–114 has biased composition (basic and acidic residues); the sequence is RRLERERGRREAT. The segment covering 681 to 691 has biased composition (acidic residues); that stretch reads GGESSESEESP.

It belongs to the glycosyltransferase 1 family. In terms of assembly, homodimer or homotetramer.

It catalyses the reaction beta-D-fructose 6-phosphate + UDP-alpha-D-glucose = sucrose 6(F)-phosphate + UDP + H(+). It functions in the pathway glycan biosynthesis; sucrose biosynthesis; sucrose from D-fructose 6-phosphate and UDP-alpha-D-glucose: step 1/2. With respect to regulation, activity is regulated by phosphorylation and moderated by concentration of metabolites and light. Its function is as follows. Plays a role in photosynthetic sucrose synthesis by catalyzing the rate-limiting step of sucrose biosynthesis from UDP-glucose and fructose- 6-phosphate. Involved in the regulation of carbon partitioning in the leaves of plants. May regulate the synthesis of sucrose and therefore play a major role as a limiting factor in the export of photoassimilates out of the leaf. Plays a role for sucrose availability that is essential for plant growth and fiber elongation. The protein is Probable sucrose-phosphate synthase (SPS) of Vicia faba (Broad bean).